The sequence spans 597 residues: Bromodomain-containing protein 9 (597 aa).

The segment covering 1–10 has biased composition (basic residues); sequence MGKKHKKHKA. Disordered regions lie at residues 1-25 and 38-138; these read MGKKHKKHKAEWRSSYEDYADKPLE and EVTE…ENES. 2 stretches are compositionally biased toward basic and acidic residues: residues 11–25 and 50–62; these read EWRSSYEDYADKPLE and SYYDDRSDHERER. At S56 the chain carries Phosphoserine. Residues 63–73 show a composition bias toward basic residues; it reads HKEKKKKKKKK. Residues 74–85 show a composition bias toward basic and acidic residues; sequence SEKEKHLDDEER. Basic residues predominate over residues 86-97; that stretch reads RKRKEEKKRKRE. Basic and acidic residues predominate over residues 111 to 126; it reads DPGKKVEVEPPPDRPV. The Bromo domain maps to 136 to 240; the sequence is NESTPIQQLL…HAGFKMMSKQ (105 aa). Residues 214 to 216 form a histone H4K5ac H4K8ac and histone H4K5bu H4K8bu binding region; it reads TYN. Position 373 is an N6-acetyllysine; alternate (K373). Residue K373 forms a Glycyl lysine isopeptide (Lys-Gly) (interchain with G-Cter in SUMO2); alternate linkage. The interval 536–597 is disordered; sequence EAQAERGGSR…SPEPAASAKT (62 aa). Residues 544–556 show a composition bias toward low complexity; that stretch reads SRPSSNLSSLSNA. Phosphoserine occurs at positions 566 and 588.

As to quaternary structure, binds acetylated histones H3 and H4. Binds butyrylated histone H4. Component of the multiprotein chromatin-remodeling subcomplex SWI/SNF called GBAF, which includes at least BICRA or BICRAL (mutually exclusive), BRD9, SS18, the core BAF subunits, SMARCA2/BRM, SMARCA4/BRG1/BAF190A, ACTL6A/BAF53, SMARCC1/BAF155, and SMARCD1/BAF60A. Interacts (via N-terminal bromodomain) with acetylated RAD54. Interacts (via C-terminus) with RAD51.

Its subcellular location is the nucleus. In terms of biological role, plays a role in chromatin remodeling and regulation of transcription. Acts as a chromatin reader that recognizes and binds acylated histones: binds histones that are acetylated and/or butyrylated. Component of SWI/SNF chromatin remodeling subcomplex GBAF that carries out key enzymatic activities, changing chromatin structure by altering DNA-histone contacts within a nucleosome in an ATP-dependent manner. Also orchestrates the RAD51-RAD54 complex formation and thereby plays a role in homologous recombination (HR). The sequence is that of Bromodomain-containing protein 9 (BRD9) from Homo sapiens (Human).